The sequence spans 274 residues: MEIYKKIYNSLLKLKEKNPLIHHITNYVTVNDCANIVLAIGASPVMADDIREVEDMVSIASALVINIGTLNKKTVKSMFLAGKKANELNIPVILDPVGVGATKYRTSIALELLEEIKFSVVRGNISEVKVLSGMNASTKGVDAESWDETNPIEERIRLVKSLSEKYNAVIGITGEKDVIGFKEEVYTVENGSSIMAKITGAGCMCTSVIASYCGAEENYLQATLSGVVSMGIAGEIAYEKTKNLGPSSFRTALIDSIYNLEESSFNERGKVYNA.

Residue Met-46 participates in substrate binding. Residues Arg-122 and Thr-173 each contribute to the ATP site. A substrate-binding site is contributed by Gly-200.

It belongs to the Thz kinase family. Requires Mg(2+) as cofactor.

The catalysed reaction is 5-(2-hydroxyethyl)-4-methylthiazole + ATP = 4-methyl-5-(2-phosphooxyethyl)-thiazole + ADP + H(+). Its pathway is cofactor biosynthesis; thiamine diphosphate biosynthesis; 4-methyl-5-(2-phosphoethyl)-thiazole from 5-(2-hydroxyethyl)-4-methylthiazole: step 1/1. Functionally, catalyzes the phosphorylation of the hydroxyl group of 4-methyl-5-beta-hydroxyethylthiazole (THZ). The chain is Hydroxyethylthiazole kinase from Clostridium tetani (strain Massachusetts / E88).